We begin with the raw amino-acid sequence, 466 residues long: Adenosylhomocysteinase (466 aa).

Residues Thr57, Asp132, and Glu192 each coordinate substrate. 193-195 (TTT) lines the NAD(+) pocket. Positions 222 and 226 each coordinate substrate. Residues Asn227, 256-261 (GYGDVG), Glu279, Asn314, 335-337 (IGH), and Asn380 each bind NAD(+).

This sequence belongs to the adenosylhomocysteinase family. The cofactor is NAD(+).

It localises to the cytoplasm. The catalysed reaction is S-adenosyl-L-homocysteine + H2O = L-homocysteine + adenosine. It participates in amino-acid biosynthesis; L-homocysteine biosynthesis; L-homocysteine from S-adenosyl-L-homocysteine: step 1/1. In terms of biological role, may play a key role in the regulation of the intracellular concentration of adenosylhomocysteine. This is Adenosylhomocysteinase from Mesorhizobium japonicum (strain LMG 29417 / CECT 9101 / MAFF 303099) (Mesorhizobium loti (strain MAFF 303099)).